The primary structure comprises 341 residues: tRNA N6-adenosine threonylcarbamoyltransferase (341 aa).

Positions 111 and 115 each coordinate Fe cation. Residues leucine 134 to glycine 138, aspartate 167, glycine 180, and asparagine 276 contribute to the substrate site. Residue aspartate 304 participates in Fe cation binding.

It belongs to the KAE1 / TsaD family. Fe(2+) is required as a cofactor.

It is found in the cytoplasm. It catalyses the reaction L-threonylcarbamoyladenylate + adenosine(37) in tRNA = N(6)-L-threonylcarbamoyladenosine(37) in tRNA + AMP + H(+). Its function is as follows. Required for the formation of a threonylcarbamoyl group on adenosine at position 37 (t(6)A37) in tRNAs that read codons beginning with adenine. Is involved in the transfer of the threonylcarbamoyl moiety of threonylcarbamoyl-AMP (TC-AMP) to the N6 group of A37, together with TsaE and TsaB. TsaD likely plays a direct catalytic role in this reaction. The sequence is that of tRNA N6-adenosine threonylcarbamoyltransferase from Pseudomonas fluorescens (strain ATCC BAA-477 / NRRL B-23932 / Pf-5).